The primary structure comprises 119 residues: Large ribosomal subunit protein bL19 (119 aa).

Belongs to the bacterial ribosomal protein bL19 family.

Its function is as follows. This protein is located at the 30S-50S ribosomal subunit interface and may play a role in the structure and function of the aminoacyl-tRNA binding site. The chain is Large ribosomal subunit protein bL19 from Pseudoalteromonas atlantica (strain T6c / ATCC BAA-1087).